Here is a 128-residue protein sequence, read N- to C-terminus: Small ribosomal subunit protein eS8 (128 aa).

Residues 1–31 (MAWYQGNDLRKPTGGKKTRHRKKRKHELGRP) form a disordered region. The segment covering 13–27 (TGGKKTRHRKKRKHE) has biased composition (basic residues).

This sequence belongs to the eukaryotic ribosomal protein eS8 family. In terms of assembly, part of the 30S ribosomal subunit.

This Staphylothermus marinus (strain ATCC 43588 / DSM 3639 / JCM 9404 / F1) protein is Small ribosomal subunit protein eS8.